Here is a 215-residue protein sequence, read N- to C-terminus: Sperm acrosome membrane-associated protein 3 (215 aa).

At 1 to 63 the chain is on the cytoplasmic side; sequence MVSALRGAPL…EARSRALRRR (63 aa). A helical; Signal-anchor for type II membrane protein transmembrane segment spans residues 64-84; that stretch reads WCPAGIMLLALVCLLSCLLPS. Over 85–215 the chain is Extracellular; sequence SEAKLYGRCE…LTEWVDGCDF (131 aa). The 128-residue stretch at 88-215 folds into the C-type lysozyme domain; the sequence is KLYGRCELAR…LTEWVDGCDF (128 aa). 4 disulfides stabilise this stretch: C93–C213, C117–C201, C151–C166, and C162–C180.

Belongs to the glycosyl hydrolase 22 family. As to quaternary structure, interacts with ASTL. Post-translationally, the processed form derives from the membrane form by proteolytic processing. In terms of tissue distribution, the processed form is expressed in sperm (at protein level). Expressed in testis, epididymis and placenta.

Its subcellular location is the cytoplasmic vesicle. It is found in the secretory vesicle. The protein localises to the acrosome membrane. The protein resides in the secreted. Functionally, sperm surface membrane protein that may be involved in sperm-egg plasma membrane adhesion and fusion during fertilization. It could be a potential receptor for the egg oligosaccharide residue N-acetylglucosamine, which is present in the extracellular matrix over the egg plasma membrane. The processed form has no detectable bacteriolytic activity in vitro. The chain is Sperm acrosome membrane-associated protein 3 (SPACA3) from Homo sapiens (Human).